We begin with the raw amino-acid sequence, 306 residues long: Palmitoyl-protein thioesterase 1 (306 aa).

An N-terminal signal peptide occupies residues methionine 1 to leucine 27. Intrachain disulfides connect cysteine 45–cysteine 46, cysteine 96–cysteine 128, and cysteine 152–cysteine 160. Serine 115 is an active-site residue. N-linked (GlcNAc...) asparagine glycosylation is found at asparagine 197, asparagine 212, and asparagine 232. Residues aspartate 233 and histidine 289 contribute to the active site.

It belongs to the palmitoyl-protein thioesterase family. Interacts with CLN5, ATP5F1A and ATP5F1B. Glycosylated.

Its subcellular location is the lysosome. It is found in the secreted. It localises to the golgi apparatus. The protein resides in the endoplasmic reticulum. It catalyses the reaction S-hexadecanoyl-L-cysteinyl-[protein] + H2O = L-cysteinyl-[protein] + hexadecanoate + H(+). It carries out the reaction hexadecanoyl-CoA + H2O = hexadecanoate + CoA + H(+). The catalysed reaction is S-hexadecanoyl-N-acetylcysteamine + H2O = N-acetylcysteamine + hexadecanoate + H(+). The enzyme catalyses S-hexadecanoyl-N-acetylcysteine methyl ester + H2O = N-acetylcysteine methyl ester + hexadecanoate + H(+). With respect to regulation, palmitoylation reduces PPT1 enzymatic activity. In terms of biological role, has thioesterase activity against fatty acid thioesters with 14 -18 carbons, including palmitoyl-CoA, S-palmitoyl-N-acetylcysteamine, and palmitoylated proteins. In contrast to PPT2, PPT1 can hydrolyze palmitoylated proteins and palmitoylcysteine. The sequence is that of Palmitoyl-protein thioesterase 1 (PPT1) from Macaca fascicularis (Crab-eating macaque).